The primary structure comprises 147 residues: Lysozyme C (147 aa).

The N-terminal stretch at 1 to 18 is a signal peptide; that stretch reads MRSLLILVLCFLPLAALG. A C-type lysozyme domain is found at 19 to 147; sequence KVYGRCELAA…VHAWIRGCRL (129 aa). 4 cysteine pairs are disulfide-bonded: cysteine 24–cysteine 145, cysteine 48–cysteine 133, cysteine 82–cysteine 98, and cysteine 94–cysteine 112.

Belongs to the glycosyl hydrolase 22 family. Monomer.

The protein localises to the secreted. It carries out the reaction Hydrolysis of (1-&gt;4)-beta-linkages between N-acetylmuramic acid and N-acetyl-D-glucosamine residues in a peptidoglycan and between N-acetyl-D-glucosamine residues in chitodextrins.. In terms of biological role, lysozymes have primarily a bacteriolytic function; those in tissues and body fluids are associated with the monocyte-macrophage system and enhance the activity of immunoagents. The chain is Lysozyme C (LYZ) from Meleagris gallopavo (Wild turkey).